Here is a 158-residue protein sequence, read N- to C-terminus: 6,7-dimethyl-8-ribityllumazine synthase (158 aa).

Residues phenylalanine 22, 57 to 59, and 84 to 86 each bind 5-amino-6-(D-ribitylamino)uracil; these read AYE and TVI. 89-90 contacts (2S)-2-hydroxy-3-oxobutyl phosphate; sequence GT. The Proton donor role is filled by histidine 92. 5-amino-6-(D-ribitylamino)uracil is bound at residue phenylalanine 117. Position 131 (arginine 131) interacts with (2S)-2-hydroxy-3-oxobutyl phosphate.

The protein belongs to the DMRL synthase family. Forms an icosahedral capsid composed of 60 subunits, arranged as a dodecamer of pentamers.

It carries out the reaction (2S)-2-hydroxy-3-oxobutyl phosphate + 5-amino-6-(D-ribitylamino)uracil = 6,7-dimethyl-8-(1-D-ribityl)lumazine + phosphate + 2 H2O + H(+). It functions in the pathway cofactor biosynthesis; riboflavin biosynthesis; riboflavin from 2-hydroxy-3-oxobutyl phosphate and 5-amino-6-(D-ribitylamino)uracil: step 1/2. In terms of biological role, catalyzes the formation of 6,7-dimethyl-8-ribityllumazine by condensation of 5-amino-6-(D-ribitylamino)uracil with 3,4-dihydroxy-2-butanone 4-phosphate. This is the penultimate step in the biosynthesis of riboflavin. This is 6,7-dimethyl-8-ribityllumazine synthase from Pectobacterium atrosepticum (strain SCRI 1043 / ATCC BAA-672) (Erwinia carotovora subsp. atroseptica).